The chain runs to 321 residues: Glucokinase (321 aa).

ATP is bound at residue alanine 9–threonine 14.

Belongs to the bacterial glucokinase family.

The protein localises to the cytoplasm. The catalysed reaction is D-glucose + ATP = D-glucose 6-phosphate + ADP + H(+). This chain is Glucokinase, found in Saccharophagus degradans (strain 2-40 / ATCC 43961 / DSM 17024).